The following is a 138-amino-acid chain: Large ribosomal subunit protein eL14A (138 aa).

The residue at position 2 (S2) is an N-acetylserine.

The protein belongs to the eukaryotic ribosomal protein eL14 family. Component of the large ribosomal subunit (LSU). Mature yeast ribosomes consist of a small (40S) and a large (60S) subunit. The 40S small subunit contains 1 molecule of ribosomal RNA (18S rRNA) and 33 different proteins (encoded by 57 genes). The large 60S subunit contains 3 rRNA molecules (25S, 5.8S and 5S rRNA) and 46 different proteins (encoded by 81 genes). Post-translationally, N-terminally acetylated by acetyltransferase NatA.

Its subcellular location is the cytoplasm. Functionally, component of the ribosome, a large ribonucleoprotein complex responsible for the synthesis of proteins in the cell. The small ribosomal subunit (SSU) binds messenger RNAs (mRNAs) and translates the encoded message by selecting cognate aminoacyl-transfer RNA (tRNA) molecules. The large subunit (LSU) contains the ribosomal catalytic site termed the peptidyl transferase center (PTC), which catalyzes the formation of peptide bonds, thereby polymerizing the amino acids delivered by tRNAs into a polypeptide chain. The nascent polypeptides leave the ribosome through a tunnel in the LSU and interact with protein factors that function in enzymatic processing, targeting, and the membrane insertion of nascent chains at the exit of the ribosomal tunnel. This Saccharomyces cerevisiae (strain ATCC 204508 / S288c) (Baker's yeast) protein is Large ribosomal subunit protein eL14A.